A 441-amino-acid chain; its full sequence is Protein arginine methyltransferase NDUFAF7, mitochondrial (441 aa).

Residues 1–46 constitute a mitochondrion transit peptide; it reads MSVLLRSGLGPLCAVARAAIPFIWRGKYFSSGNEPAENPVTPMLRH.

The protein belongs to the NDUFAF7 family. Interacts with NDUFS2.

Its subcellular location is the mitochondrion. The catalysed reaction is L-arginyl-[protein] + 2 S-adenosyl-L-methionine = N(omega),N(omega)'-dimethyl-L-arginyl-[protein] + 2 S-adenosyl-L-homocysteine + 2 H(+). Functionally, arginine methyltransferase involved in the assembly or stability of mitochondrial NADH:ubiquinone oxidoreductase complex (complex I). Acts by mediating symmetric dimethylation of 'Arg-118' of NDUFS2 after it assembles into the complex I, stabilizing the early intermediate complex. The polypeptide is Protein arginine methyltransferase NDUFAF7, mitochondrial (Homo sapiens (Human)).